A 642-amino-acid chain; its full sequence is Threonine--tRNA ligase (642 aa).

A TGS domain is found at 1–61; sequence MPVITLPDGS…ENDAQLSIIT (61 aa). Residues 243–534 form a catalytic region; sequence DHRKIGKQLD…LTEEFAGFFP (292 aa). The residue at position 286 (lysine 286) is an N6-acetyllysine. 3 residues coordinate Zn(2+): cysteine 334, histidine 385, and histidine 511.

The protein belongs to the class-II aminoacyl-tRNA synthetase family. In terms of assembly, homodimer. It depends on Zn(2+) as a cofactor.

The protein localises to the cytoplasm. The enzyme catalyses tRNA(Thr) + L-threonine + ATP = L-threonyl-tRNA(Thr) + AMP + diphosphate + H(+). Functionally, catalyzes the attachment of threonine to tRNA(Thr) in a two-step reaction: L-threonine is first activated by ATP to form Thr-AMP and then transferred to the acceptor end of tRNA(Thr). Also edits incorrectly charged L-seryl-tRNA(Thr). This Shigella boydii serotype 18 (strain CDC 3083-94 / BS512) protein is Threonine--tRNA ligase.